Consider the following 966-residue polypeptide: LRR receptor-like serine/threonine-protein kinase ERL1 (966 aa).

A signal peptide spans Met-1–Ala-25. Residues Met-26–Arg-582 are Extracellular-facing. One copy of the LRR 1 repeat lies at Phe-40–Gly-63. N-linked (GlcNAc...) asparagine glycosylation is found at Asn-68 and Asn-77. 20 LRR repeats span residues Ser-75–Leu-94, Arg-95–Cys-118, Ser-120–Leu-142, Lys-143–Ile-166, Asn-168–Asn-190, Val-192–Leu-214, Thr-215–Cys-238, Thr-239–Phe-261, Leu-262–Met-285, Gln-286–Phe-311, Gly-313–Met-333, Ser-334–Leu-357, Gln-359–Cys-381, Ala-383–Asn-404, Leu-405–Ile-429, Asn-431–Leu-453, Glu-454–Asn-476, Arg-478–Gln-500, Leu-501–Cys-525, and Thr-527–Arg-550. N-linked (GlcNAc...) asparagine glycans are attached at residues Asn-226 and Asn-237. 2 N-linked (GlcNAc...) asparagine glycosylation sites follow: Asn-308 and Asn-332. The N-linked (GlcNAc...) asparagine glycan is linked to Asn-377. Asn-412, Asn-441, and Asn-460 each carry an N-linked (GlcNAc...) asparagine glycan. 3 N-linked (GlcNAc...) asparagine glycosylation sites follow: Asn-532, Asn-537, and Asn-547. A helical transmembrane segment spans residues Gly-583 to Val-603. At Tyr-604–Ile-966 the chain is on the cytoplasmic side. 2 positions are modified to phosphothreonine: Thr-637 and Thr-645. The Protein kinase domain occupies Leu-648 to Leu-921. ATP is bound by residues Ile-654–Val-662 and Lys-676. 2 positions are modified to phosphotyrosine: Tyr-721 and Tyr-760. Residue Asp-773 is the Proton acceptor of the active site. Tyr-815 bears the Phosphotyrosine mark. The residue at position 823 (Thr-823) is a Phosphothreonine.

The protein belongs to the protein kinase superfamily. Ser/Thr protein kinase family. In terms of assembly, homodimer and heterodimer with ERECTA and TMM. Interacts with EPF1 and EPF2. Interacts with SERK1, SERK2, SERK3/BAK1 and SERK4 in a EPF1-induced manner. Mostly expressed in developing organs, including bud clusters, flowers, siliques and young rosettes. Also detected in mature aboveground organs, such as leaves, stems and pedicels, but barely in roots.

The protein resides in the cell membrane. It catalyses the reaction L-seryl-[protein] + ATP = O-phospho-L-seryl-[protein] + ADP + H(+). It carries out the reaction L-threonyl-[protein] + ATP = O-phospho-L-threonyl-[protein] + ADP + H(+). Its function is as follows. Receptor kinase that regulates inflorescence architecture and organ shape as well as stomatal patterning, including density and clustering, together with ER and ERL2. Redundantly involved with ER in procambial development regulation. Forms a functional ligand-receptor pair with EPF1 (AC Q8S8I4). Forms a constitutive complex with TMM involved in the recognition of the stomatal regulatory peptides EPF1, EPF2 and EPFL9/STOMAGEN. This chain is LRR receptor-like serine/threonine-protein kinase ERL1, found in Arabidopsis thaliana (Mouse-ear cress).